The primary structure comprises 422 residues: S-adenosylmethionine synthase (422 aa).

His15 is a binding site for ATP. Asp17 contacts Mg(2+). Residue Glu43 coordinates K(+). Residues Glu56 and Gln99 each contribute to the L-methionine site. The interval 99 to 109 (QSPDISRGVTE) is flexible loop. Residues 166-168 (DGK), 232-233 (RF), Asp241, 247-248 (RK), Ala264, and Lys268 each bind ATP. Residue Asp241 participates in L-methionine binding. Residue Lys272 coordinates L-methionine. A disordered region spans residues 390 to 422 (AVPATTNGAGSKNGSGSKKEPKRKGKKETGAQA).

The protein belongs to the AdoMet synthase family. Homotetramer; dimer of dimers. The cofactor is Mg(2+). K(+) serves as cofactor.

It is found in the cytoplasm. It carries out the reaction L-methionine + ATP + H2O = S-adenosyl-L-methionine + phosphate + diphosphate. The protein operates within amino-acid biosynthesis; S-adenosyl-L-methionine biosynthesis; S-adenosyl-L-methionine from L-methionine: step 1/1. Its function is as follows. Catalyzes the formation of S-adenosylmethionine (AdoMet) from methionine and ATP. The overall synthetic reaction is composed of two sequential steps, AdoMet formation and the subsequent tripolyphosphate hydrolysis which occurs prior to release of AdoMet from the enzyme. The polypeptide is S-adenosylmethionine synthase (Sorangium cellulosum (strain So ce56) (Polyangium cellulosum (strain So ce56))).